Reading from the N-terminus, the 271-residue chain is Urease accessory protein UreD (271 aa).

The protein belongs to the UreD family. In terms of assembly, ureD, UreF and UreG form a complex that acts as a GTP-hydrolysis-dependent molecular chaperone, activating the urease apoprotein by helping to assemble the nickel containing metallocenter of UreC. The UreE protein probably delivers the nickel.

Its subcellular location is the cytoplasm. Functionally, required for maturation of urease via the functional incorporation of the urease nickel metallocenter. The protein is Urease accessory protein UreD of Actinomyces naeslundii.